A 77-amino-acid chain; its full sequence is Small ribosomal subunit protein uS17 (77 aa).

It belongs to the universal ribosomal protein uS17 family. Part of the 30S ribosomal subunit.

Functionally, one of the primary rRNA binding proteins, it binds specifically to the 5'-end of 16S ribosomal RNA. The polypeptide is Small ribosomal subunit protein uS17 (Rickettsia canadensis (strain McKiel)).